Reading from the N-terminus, the 234-residue chain is Phosphoribosylaminoimidazole-succinocarboxamide synthase (234 aa).

The protein belongs to the SAICAR synthetase family.

The catalysed reaction is 5-amino-1-(5-phospho-D-ribosyl)imidazole-4-carboxylate + L-aspartate + ATP = (2S)-2-[5-amino-1-(5-phospho-beta-D-ribosyl)imidazole-4-carboxamido]succinate + ADP + phosphate + 2 H(+). The protein operates within purine metabolism; IMP biosynthesis via de novo pathway; 5-amino-1-(5-phospho-D-ribosyl)imidazole-4-carboxamide from 5-amino-1-(5-phospho-D-ribosyl)imidazole-4-carboxylate: step 1/2. This is Phosphoribosylaminoimidazole-succinocarboxamide synthase from Staphylococcus aureus (strain COL).